Consider the following 499-residue polypeptide: Alpha-amylase 3 (499 aa).

Asn127 and Asp183 together coordinate Ca(2+). The active-site Nucleophile is Asp213. Residue His217 participates in Ca(2+) binding. The active-site Proton donor is Glu248.

It belongs to the glycosyl hydrolase 13 family. In terms of assembly, monomer. Requires Ca(2+) as cofactor.

It localises to the cytoplasm. It catalyses the reaction Endohydrolysis of (1-&gt;4)-alpha-D-glucosidic linkages in polysaccharides containing three or more (1-&gt;4)-alpha-linked D-glucose units.. This chain is Alpha-amylase 3 (amyC), found in Dictyoglomus thermophilum (strain ATCC 35947 / DSM 3960 / H-6-12).